Consider the following 591-residue polypeptide: L-fucose isomerase (591 aa).

Active-site proton acceptor residues include E337 and D361. Mn(2+) is bound by residues E337, D361, and H528.

It belongs to the L-fucose isomerase family. In terms of assembly, homohexamer. It depends on Mn(2+) as a cofactor.

The protein localises to the cytoplasm. It catalyses the reaction L-fucose = L-fuculose. The protein operates within carbohydrate degradation; L-fucose degradation; L-lactaldehyde and glycerone phosphate from L-fucose: step 1/3. In terms of biological role, converts the aldose L-fucose into the corresponding ketose L-fuculose. The sequence is that of L-fucose isomerase from Salmonella paratyphi B (strain ATCC BAA-1250 / SPB7).